Consider the following 345-residue polypeptide: Phosphoribosylformylglycinamidine cyclo-ligase (345 aa).

Belongs to the AIR synthase family.

The protein localises to the cytoplasm. It catalyses the reaction 2-formamido-N(1)-(5-O-phospho-beta-D-ribosyl)acetamidine + ATP = 5-amino-1-(5-phospho-beta-D-ribosyl)imidazole + ADP + phosphate + H(+). It participates in purine metabolism; IMP biosynthesis via de novo pathway; 5-amino-1-(5-phospho-D-ribosyl)imidazole from N(2)-formyl-N(1)-(5-phospho-D-ribosyl)glycinamide: step 2/2. This chain is Phosphoribosylformylglycinamidine cyclo-ligase, found in Salmonella typhimurium (strain LT2 / SGSC1412 / ATCC 700720).